The following is a 145-amino-acid chain: Protein ImpA (145 aa).

Residues Ser64 and Lys101 each act as for autocatalytic cleavage activity in the active site.

The protein belongs to the peptidase S24 family.

Involved in UV protection and mutation. The protein is Protein ImpA of Escherichia coli.